The primary structure comprises 189 residues: UPF0312 protein VV2_0231 (189 aa).

A signal peptide spans 1–22 (MRKSVIATGLALMMAVPFAANA).

Belongs to the UPF0312 family. Type 1 subfamily.

The protein resides in the periplasm. This Vibrio vulnificus (strain CMCP6) protein is UPF0312 protein VV2_0231.